The chain runs to 60 residues: Cytotoxin 2 (60 aa).

Intrachain disulfides connect C3–C21, C14–C38, C42–C53, and C54–C59.

The protein belongs to the three-finger toxin family. Short-chain subfamily. Type IA cytotoxin sub-subfamily. As to quaternary structure, monomer in solution; Homodimer and oligomer in the presence of negatively charged lipids forming a pore with a size ranging between 20 and 30 Angstroms. As to expression, expressed by the venom gland.

The protein resides in the secreted. The protein localises to the target cell membrane. Its function is as follows. Shows cytolytic activity on many different cells by forming pore in lipid membranes. In vivo, increases heart rate or kills the animal by cardiac arrest. In addition, it binds to heparin with high affinity, interacts with Kv channel-interacting protein 1 (KCNIP1) in a calcium-independent manner, and binds to integrin alpha-V/beta-3 (ITGAV/ITGB3) with moderate affinity. In Naja annulifera (Banded Egyptian cobra), this protein is Cytotoxin 2.